The following is a 349-amino-acid chain: PhoH-like protein (349 aa).

147–154 (GPAGTGKT) contacts ATP.

This sequence belongs to the PhoH family.

The protein resides in the cytoplasm. This is PhoH-like protein from Mycobacterium leprae (strain TN).